Reading from the N-terminus, the 109-residue chain is Anti-sigma-B factor antagonist (109 aa).

The 107-residue stretch at 3 to 109 (INVDVKQNEN…ISAKSEGGVQ (107 aa)) folds into the STAS domain. Residues Ser52 and Ser56 each carry the phosphoserine modification. The residue at position 57 (Thr57) is a Phosphothreonine.

Belongs to the anti-sigma-factor antagonist family. In terms of assembly, monomer. In stressed cells, forms a complex with RsbW. The predominant form of this complex has a stoichiometry of 2:2 (one dimer of RsbW is bound by two monomers of RsbV). Binds to RsbW in the presence of low levels of ATP or under conditions of energy or environmental stress (through dephosphorylation by RsbP or RsbU). Phosphorylated by RsbW on a serine residue. Dephosphorylated by RsbP or RsbU.

Functionally, positive regulator of sigma-B activity. Non-phosphorylated RsbV binds to RsbW, preventing its association with sigma-B. When phosphorylated, releases RsbW, which is then free to complex with and inactivate sigma-B. This chain is Anti-sigma-B factor antagonist (rsbV), found in Bacillus subtilis (strain 168).